Reading from the N-terminus, the 616-residue chain is Secretogranin-2 (616 aa).

Residues 1–27 (MAEAKTHWLGASLSLILLIFLLATAEA) form the signal peptide. A propeptide spanning residues 28–30 (ASF) is cleaved from the precursor. 2 disordered regions span residues 68-104 (QAHK…RDSL) and 120-146 (AENE…PMDM). Over residues 92-104 (ENSDLPESSRDSL) the composition is skewed to basic and acidic residues. The span at 122-140 (NEPQSSLKENKPYTLNSEK) shows a compositional bias: polar residues. Y150 is subject to Sulfotyrosine. A phosphoserine mark is found at S173, S267, S431, S531, S554, and S555. Positions 255 to 283 (KIESQTQEEVRDSKENIEKNEQINDEMKR) are enriched in basic and acidic residues. A disordered region spans residues 255 to 290 (KIESQTQEEVRDSKENIEKNEQINDEMKRSGQMGLQ). A compositionally biased stretch (basic and acidic residues) spans 548 to 560 (ERLNQHSSQETDK). The interval 548-582 (ERLNQHSSQETDKLALVSKRLPVATPKSDDAPNRQ) is disordered.

The protein belongs to the chromogranin/secretogranin protein family. In terms of assembly, interacts with Secretogranin III/SCG3.

It is found in the secreted. Neuroendocrine protein of the granin family that regulates the biogenesis of secretory granules. The chain is Secretogranin-2 (SCG2) from Sus scrofa (Pig).